Here is a 427-residue protein sequence, read N- to C-terminus: Ceramide Synthase FUM18 (427 aa).

Residue asparagine 20 is glycosylated (N-linked (GlcNAc...) asparagine). The next 6 membrane-spanning stretches (helical) occupy residues 38–58, 131–151, 173–193, 202–222, 250–270, and 335–355; these read ILPL…IHIS, EQGW…LIWA, GLIK…VISV, YWLN…CYVY, YLGF…TWIV, and VSIL…FGFI. In terms of domain architecture, TLC spans 124 to 364; that stretch reads RKVVRFSEQG…ICKVAIGVLD (241 aa). The disordered stretch occupies residues 373 to 406; that stretch reads SDVESDEEDSEPVANGSGWQQSQLQPGRRVGSNG. Asparagine 387 carries N-linked (GlcNAc...) asparagine glycosylation.

The protein belongs to the sphingosine N-acyltransferase family.

The protein resides in the endoplasmic reticulum membrane. Its pathway is mycotoxin biosynthesis. Ceramide synthase; part of the gene cluster that mediates the biosynthesis of fumonisins B1 (FB1), B2 (FB2), B3 (FB3), and B4 (FB4), which are carcinogenic mycotoxins. Plays a role in self-protection from FB1 toxicity by contributing to ceramide synthesis. The biosynthesis starts with the FUM1-catalyzed carbon chain assembly from one molecule of acetyl-CoA, eight molecules of malonyl-CoA, and two molecules of methionine (in S-adenosyl form). The C18 polyketide chain is released from the enzyme by a nucleophilic attack of a carbanion, which is derived from R-carbon of alanine by decarboxylation, on the carbonyl carbon of polyketide acyl chain. This step is catalyzed by the pyridoxal 5'-phosphate-dependent aminoacyl transferase FUM8. The resultant 3-keto intermediate is then stereospecifically reduced to a 3-hydroxyl product by reductase FUM13. Subsequent oxidations at C-10 by the cytochrome P450 monooxygenase FUM2, C-14 and C-15 by FUM6, FUM12 or FUM15, tricarballylic esterification of the hydroxyl groups on C-14 and C-15 by acyltransferase FUM14, and C-5 hydroxylation by 2-keto-glutarate-dependent dioxygenase FUM3 furnish the biosynthesis of fumonisins. The tricarballylic moieties are most likely derived from the citric acid cycle, and their addition to the carbon backbone may involve FUM7, FUM10, FUM11 and FUM14. The protein is Ceramide Synthase FUM18 of Gibberella moniliformis (strain M3125 / FGSC 7600) (Maize ear and stalk rot fungus).